Consider the following 510-residue polypeptide: NAD(P)H-quinone oxidoreductase subunit 2 B, chloroplastic (510 aa).

13 helical membrane-spanning segments follow: residues Leu24–Leu44, Ile57–Phe77, Ile99–Ile119, Met124–Cys144, Leu149–Tyr169, Tyr183–Gly203, Pro227–Ala247, Trp295–Ile315, Met323–Asp343, Tyr354–Leu374, Ala395–Phe415, Leu418–Leu438, and Met484–Ile504.

This sequence belongs to the complex I subunit 2 family. In terms of assembly, NDH is composed of at least 16 different subunits, 5 of which are encoded in the nucleus.

The protein resides in the plastid. Its subcellular location is the chloroplast thylakoid membrane. The catalysed reaction is a plastoquinone + NADH + (n+1) H(+)(in) = a plastoquinol + NAD(+) + n H(+)(out). It carries out the reaction a plastoquinone + NADPH + (n+1) H(+)(in) = a plastoquinol + NADP(+) + n H(+)(out). Functionally, NDH shuttles electrons from NAD(P)H:plastoquinone, via FMN and iron-sulfur (Fe-S) centers, to quinones in the photosynthetic chain and possibly in a chloroplast respiratory chain. The immediate electron acceptor for the enzyme in this species is believed to be plastoquinone. Couples the redox reaction to proton translocation, and thus conserves the redox energy in a proton gradient. The chain is NAD(P)H-quinone oxidoreductase subunit 2 B, chloroplastic from Citrus sinensis (Sweet orange).